Here is an 82-residue protein sequence, read N- to C-terminus: Ice-structuring protein B (82 aa).

The N-terminal stretch at 1–23 (MALSLFTVGQLIFLFWTMRITEA) is a signal peptide. Residues 24–44 (RPDPAAKAAPAAAAVPAAAAP) constitute a propeptide, removed by a dipeptidylpeptidase. Arginine amide is present on arginine 81.

It belongs to the type-I AFP family. In terms of processing, amidated. In terms of tissue distribution, detected in liver (at protein level).

The protein localises to the secreted. The protein resides in the extracellular space. Its function is as follows. Contributes to protect fish blood from freezing at subzero sea water temperatures. Lowers the blood freezing point. Binds to nascent ice crystals and prevents further growth. This Pseudopleuronectes americanus (Winter flounder) protein is Ice-structuring protein B.